Reading from the N-terminus, the 1356-residue chain is Fibronectin type III domain containing protein 3C1 (1356 aa).

Disordered regions lie at residues 303–341 (PRNMADNIPDTNTTDTITSSSAHTPSISTSNATFCSDNN), 356–402 (TYDE…SDVA), and 428–452 (NQKKSQSSNASLKEHNTEDRTQPGC). A compositionally biased stretch (low complexity) spans 308 to 341 (DNIPDTNTTDTITSSSAHTPSISTSNATFCSDNN). Over residues 370-393 (PSCTSQSASNPSVSENAHNPSSIN) the composition is skewed to polar residues. Residues 439-448 (LKEHNTEDRT) show a composition bias toward basic and acidic residues. Fibronectin type-III domains follow at residues 454–549 (NIEK…TPGC), 553–648 (PPLA…TPPA), 650–741 (LPPK…TRPA), and 745–842 (CPNK…TLPP). Polar residues predominate over residues 825–838 (GQSRPSDVLTIQTP). The interval 825–894 (GQSRPSDVLT…QDRKVHPSSE (70 aa)) is disordered. Positions 883-894 (PHQDRKVHPSSE) are enriched in basic and acidic residues. Fibronectin type-III domains lie at 914 to 1007 (PPSQ…TPGT), 1017 to 1103 (EVES…TKPL), 1104 to 1199 (PPEP…TKSP), and 1202 to 1299 (ALKA…TYKH). A disordered region spans residues 1299–1320 (HHSGHGKGSGSKGKGNHNDKGE). A helical membrane pass occupies residues 1330-1350 (TFVLTLLIGFALIAVLCAVAV). The Cytoplasmic portion of the chain corresponds to 1351–1356 (QYLLIN).

It belongs to the FNDC3 family.

The protein resides in the membrane. The protein is Fibronectin type III domain containing protein 3C1 (Fndc3c1) of Mus musculus (Mouse).